The chain runs to 979 residues: Putative transcription initiation factor TFIID 111 kDa subunit (979 aa).

S244 is subject to Phosphoserine.

TFIID is composed of TATA binding protein (TBP) and a number of TBP-associated factors (TAFs).

The protein resides in the nucleus. Its function is as follows. TAFs are components of the transcription factor IID (TFIID) complex that are essential for mediating regulation of RNA polymerase transcription. This is Putative transcription initiation factor TFIID 111 kDa subunit from Schizosaccharomyces pombe (strain 972 / ATCC 24843) (Fission yeast).